Reading from the N-terminus, the 710-residue chain is Polyribonucleotide nucleotidyltransferase (710 aa).

Mg(2+) is bound by residues aspartate 487 and aspartate 493. In terms of domain architecture, KH spans 554–613 (PRIEVMNIPVDKIREVIGSGGKVIREIVEKTGAKINIEDDGTVKIASSSGKEIEAARKWI). Positions 623-691 (GQIYEGTVVK…ERGKVRLSMK (69 aa)) constitute an S1 motif domain.

The protein belongs to the polyribonucleotide nucleotidyltransferase family. Mg(2+) serves as cofactor.

Its subcellular location is the cytoplasm. The catalysed reaction is RNA(n+1) + phosphate = RNA(n) + a ribonucleoside 5'-diphosphate. Its function is as follows. Involved in mRNA degradation. Catalyzes the phosphorolysis of single-stranded polyribonucleotides processively in the 3'- to 5'-direction. The chain is Polyribonucleotide nucleotidyltransferase from Rhizobium rhizogenes (strain K84 / ATCC BAA-868) (Agrobacterium radiobacter).